The sequence spans 312 residues: Malate dehydrogenase (312 aa).

NAD(+) is bound by residues G12–G17 and D36. R87 and R93 together coordinate substrate. NAD(+) contacts are provided by residues N100 and L123–N125. Substrate is bound at residue N125. At S149 the chain carries Phosphoserine. R156 is a binding site for substrate. Catalysis depends on H180, which acts as the Proton acceptor.

It belongs to the LDH/MDH superfamily. MDH type 3 family.

It carries out the reaction (S)-malate + NAD(+) = oxaloacetate + NADH + H(+). Its function is as follows. Catalyzes the reversible oxidation of malate to oxaloacetate. In Bacillus anthracis (strain A0248), this protein is Malate dehydrogenase.